The primary structure comprises 423 residues: Zinc finger protein Gfi-1 (423 aa).

The interval 1 to 20 (MPRSFLVKSKKAHSYHQPRS) is SNAG domain. The tract at residues 1–102 (MPRSFLVKSK…PPSPSVSPAS (102 aa)) is disordered. Phosphoserine occurs at positions 20 and 57. A compositionally biased stretch (basic and acidic residues) spans 48-57 (SKMEPRERLS). The interval 141–258 (RQCSALERSA…LLLGGGSYKC (118 aa)) is required for interaction with RELA. 6 C2H2-type zinc fingers span residues 256–279 (YKCIKCSKVFSTPHGLEVHVRRSH), 285–307 (FACEMCGKTFGHAVSLEQHKAVH), 313–335 (FDCKICGKSFKRSSTLSTHLLIH), 341–363 (YPCQYCGKRFHQKSDMKKHTFIH), 369–391 (HKCQVCGKAFSQSSNLITHSRKH), and 397–420 (FGCDLCGKGFQRKVDLRRHRETQH).

In terms of assembly, interacts with U2AF1L4. Component of RCOR-GFI-KDM1A-HDAC complexes. Interacts directly with RCOR1, KDM1A and HDAC2. Also interacts with HDAC1. regions. Interacts (via the zinc-finger domain) with ARIH2; the interaction prevents GFI1 ubiquitination and proteasomal degradation. Interacts with PIAS3; the interaction relieves the inhibitory effect of PIAS3 on STAT3-mediated transcriptional activity. Forms a complex with EHMT2 and HDAC1 to promote 'Lys-9' dimethylation of H3 (H3K9Me2) and repress expression of target genes. Interacts directly with EHMT2. Component of the GFI1-AJUBA-HDAC1 repressor complex. Interacts directly with AJUBA (via ITS LIM domains); the interaction results in the HDAC-dependent corepression of a subset of GFI1 target genes and, occurs independent of the SNAG domain. Interacts with SPI1; the interaction inhibits SPI1 transcriptional activity targeted at macrophage-specific genes, repressing macrophage differentiation of myeloid progenitor cells and promoting granulocyte commitment. Interacts with RUNX1T1; the interaction represses HDAC-mediated transcriptional activity. Interacts with RELA; the interaction occurs on liposaccharide (LPS) stimulation controls RELA DNA binding activity and regulates endotoxin-mediated TOLL-like receptor inflammatory response. Interacts (via the C-terminal zinc fingers) with ZBTB17; the interaction results in the recruitment of GFI1 to the CDKN1A/p21 promoter and repression of CDKN1A/p21 transcription. Ubiquitinated. Restricted to lymphoid tissues and testes in adult animals.

It is found in the nucleus. In terms of biological role, transcription repressor essential for hematopoiesis. Functions in a cell-context and development-specific manner. Binds to 5'-TAAATCAC[AT]GCA-3' in the promoter region of a large number of genes. Component of several complexes, including the EHMT2-GFI1-HDAC1, AJUBA-GFI1-HDAC1 and RCOR-GFI-KDM1A-HDAC complexes, that suppress, via histone deacetylase (HDAC) recruitment, a number of genes implicated in multilineage blood cell development. Regulates neutrophil differentiation, promotes proliferation of lymphoid cells, and is required for granulocyte development. Inhibits SPI1 transcriptional activity at macrophage-specific genes, repressing macrophage differentiation of myeloid progenitor cells and promoting granulocyte commitment. Mediates, together with U2AF1L4, the alternative splicing of CD45 and controls T-cell receptor signaling. Regulates the endotoxin-mediated Toll-like receptor (TLR) inflammatory response by antagonizing RELA. Cooperates with CBFA2T2 to regulate ITGB1-dependent neurite growth. Controls cell-cycle progression by repressing CDKNIA/p21 transcription in response to TGFB1 via recruitment of GFI1 by ZBTB17 to the CDKNIA/p21 and CDKNIB promoters. Required for the maintenance of inner ear hair cells. In addition to its role in transcription, acts as a substrate adapter for PRMT1 in the DNA damage response: facilitates the recognition of TP53BP1 and MRE11 substrates by PRMT1, promoting their methylation and the DNA damage response. This chain is Zinc finger protein Gfi-1 (Gfi1), found in Rattus norvegicus (Rat).